We begin with the raw amino-acid sequence, 767 residues long: Cation/H(+) antiporter 27 (767 aa).

A run of 11 helical transmembrane segments spans residues 39–59 (LPLL…FQFL), 63–83 (FGKF…PSVI), 99–119 (VYII…ITTC), 135–155 (INGI…AILI), 173–193 (HVAI…LSSL), 205–225 (LASM…NIAI), 242–262 (VLQM…MLWM), 280–300 (ICVL…PYFF), 323–343 (IGCF…GLNI), 371–391 (IALP…VGFI), and 415–435 (KSFG…IVIV).

It belongs to the monovalent cation:proton antiporter 2 (CPA2) transporter (TC 2.A.37) family. CHX (TC 2.A.37.4) subfamily. Specifically expressed in pollen.

It is found in the membrane. May operate as a cation/H(+) antiporter. This is Cation/H(+) antiporter 27 (CHX27) from Arabidopsis thaliana (Mouse-ear cress).